Here is a 402-residue protein sequence, read N- to C-terminus: Homoserine O-acetyltransferase (402 aa).

Polar residues predominate over residues 1-17 (MDWQTTSADTAPSSFIT). The tract at residues 1-39 (MDWQTTSADTAPSSFITEEQDRSLFGKPPASGAWKESDP) is disordered. An AB hydrolase-1 domain is found at 78 to 388 (NAVLVLHALT…HFGHDGFLIE (311 aa)). Ser-183 functions as the Nucleophile in the catalytic mechanism. Arg-255 contributes to the substrate binding site. Catalysis depends on residues Asp-349 and His-382. Position 383 (Asp-383) interacts with substrate.

The protein belongs to the AB hydrolase superfamily. MetX family. In terms of assembly, homodimer.

It is found in the cytoplasm. The enzyme catalyses L-homoserine + acetyl-CoA = O-acetyl-L-homoserine + CoA. It functions in the pathway amino-acid biosynthesis; L-methionine biosynthesis via de novo pathway; O-acetyl-L-homoserine from L-homoserine: step 1/1. In terms of biological role, transfers an acetyl group from acetyl-CoA to L-homoserine, forming acetyl-L-homoserine. The polypeptide is Homoserine O-acetyltransferase (Leifsonia xyli subsp. xyli (strain CTCB07)).